Reading from the N-terminus, the 225-residue chain is 2-amino-5-formylamino-6-ribosylaminopyrimidin-4(3H)-one 5'-monophosphate deformylase (225 aa).

Fe cation contacts are provided by Glu-28, His-30, Asp-39, and His-107.

The protein belongs to the creatininase superfamily. FAPy deformylase family. Homodimer. Fe(2+) serves as cofactor. Zn(2+) is required as a cofactor.

It carries out the reaction 2-amino-5-formylamino-6-(5-phospho-D-ribosylamino)pyrimidin-4(3H)-one + H2O = 2,5-diamino-6-(1-D-ribosylamino)pyrimidin-4(3H)-one 5'-phosphate + formate + H(+). It functions in the pathway cofactor biosynthesis; coenzyme F420 biosynthesis. Its pathway is cofactor biosynthesis; riboflavin biosynthesis. Functionally, catalyzes the hydrolysis of the formamide of 2-amino-5-formylamino-6-ribosylamino-4(3H)-pyrimidinone 5'-monophosphate (FAPy) to form 2,5-diamino-6-ribosylamino-4(3H)-pyrimidinone 5'-phosphate (APy). This Methanocaldococcus fervens (strain DSM 4213 / JCM 15782 / AG86) (Methanococcus fervens) protein is 2-amino-5-formylamino-6-ribosylaminopyrimidin-4(3H)-one 5'-monophosphate deformylase.